The sequence spans 266 residues: Undecaprenyl-diphosphatase (266 aa).

Helical transmembrane passes span 39-59, 86-106, 112-132, 153-173, 189-209, 216-236, and 246-266; these read PGSS…VWYF, SIFI…LFVP, VLRS…FMYL, LIGF…GITI, FSFL…FIFS, IGFL…LLAI, and NGLK…LLNL.

Belongs to the UppP family.

It is found in the cell inner membrane. It carries out the reaction di-trans,octa-cis-undecaprenyl diphosphate + H2O = di-trans,octa-cis-undecaprenyl phosphate + phosphate + H(+). Catalyzes the dephosphorylation of undecaprenyl diphosphate (UPP). Confers resistance to bacitracin. The polypeptide is Undecaprenyl-diphosphatase (Prochlorococcus marinus (strain MIT 9215)).